We begin with the raw amino-acid sequence, 247 residues long: Dihydroorotate dehydrogenase B (NAD(+)), electron transfer subunit (247 aa).

Residues 2-96 form the FAD-binding FR-type domain; sequence RWKMKARVLS…TGPHGNGFEI (95 aa). FAD is bound by residues 49–52, 64–66, and 71–72; these read RPFS, LYQ, and GT. Residues C210, C215, C218, and C234 each coordinate [2Fe-2S] cluster.

It belongs to the PyrK family. As to quaternary structure, heterotetramer of 2 PyrK and 2 PyrD type B subunits. The cofactor is [2Fe-2S] cluster. FAD is required as a cofactor.

Its pathway is pyrimidine metabolism; UMP biosynthesis via de novo pathway; orotate from (S)-dihydroorotate (NAD(+) route): step 1/1. Responsible for channeling the electrons from the oxidation of dihydroorotate from the FMN redox center in the PyrD type B subunit to the ultimate electron acceptor NAD(+). The polypeptide is Dihydroorotate dehydrogenase B (NAD(+)), electron transfer subunit (Caldanaerobacter subterraneus subsp. tengcongensis (strain DSM 15242 / JCM 11007 / NBRC 100824 / MB4) (Thermoanaerobacter tengcongensis)).